Consider the following 2485-residue polypeptide: Probable polyketide synthase 10 (2485 aa).

The region spanning 8–447 is the Ketosynthase family 3 (KS3) domain; it reads EDDIAIIGVG…GANCCIILSE (440 aa). Active-site for beta-ketoacyl synthase activity residues include C184, H325, and H363. The segment at 636-669 is acyl/malonyl transferase; sequence GIEASFIVGHSLGEISAAHCSGMIDLETLCYIIY. S646 serves as the catalytic For acyl/malonyl transferase activity. The N-terminal hotdog fold stretch occupies residues 930–1054; sequence PPITILGNES…GNFHISNNLF (125 aa). The region spanning 930–1220 is the PKS/mFAS DH domain; that stretch reads PPITILGNES…SKSLTPIQDP (291 aa). The active-site Proton acceptor; for dehydratase activity is H964. A C-terminal hotdog fold region spans residues 1071 to 1220; sequence NYSLIERDDL…SKSLTPIQDP (150 aa). The Proton donor; for dehydratase activity role is filled by D1134. One can recognise a Carrier domain in the interval 2410-2485; the sequence is ESNKGIDGLL…NQLIKFLNKK (76 aa). An O-(pantetheine 4'-phosphoryl)serine modification is found at S2447.

Pantetheine 4'-phosphate serves as cofactor.

Its function is as follows. Probable polyketide synthase. The polypeptide is Probable polyketide synthase 10 (pks10) (Dictyostelium discoideum (Social amoeba)).